A 194-amino-acid chain; its full sequence is Endo-1,4-beta-xylanase (194 aa).

At Gly1 the chain carries N-acetylglycine. The GH11 domain occupies 1-191 (GTTPNSEGWH…SSGYARITVA (191 aa)). The Nucleophile role is filled by Glu86. Cys110 and Cys154 form a disulfide bridge. The active-site Proton donor is Glu178.

Belongs to the glycosyl hydrolase 11 (cellulase G) family.

It carries out the reaction Endohydrolysis of (1-&gt;4)-beta-D-xylosidic linkages in xylans.. The protein operates within glycan degradation; xylan degradation. This Byssochlamys spectabilis (Paecilomyces variotii) protein is Endo-1,4-beta-xylanase.